Here is a 626-residue protein sequence, read N- to C-terminus: Grainyhead-like protein 3 homolog (626 aa).

Residues 30 to 95 are transcription activation; the sequence is EAWKTYLENP…QGKRYYHGME (66 aa). One can recognise a Grh/CP2 DB domain in the interval 226 to 460; the sequence is SLKSDFEYTL…DLETPPVLFI (235 aa).

The protein belongs to the grh/CP2 family. Grainyhead subfamily. In terms of assembly, homodimer, also forms heterodimers with GRHL1 and GRHL2. Interacts with LMO4. Expressed in brain, colon, pancreas, placenta and kidney. Isoform 1 is expressed in lung and tonsil. Isoform 2 is prostate-specific.

The protein resides in the nucleus. Transcription factor playing important roles in primary neurulation and in the differentiation of stratified epithelia of both ectodermal and endodermal origin. Binds directly to the consensus DNA sequence 5'-AACCGGTT-3' acting as an activator and repressor on distinct target genes. xhibits functional redundancy with GRHL2 in epidermal morphogenetic events and epidermal wound repair. Exhibits functional redundancy with GRHL2 in epidermal morphogenetic events and epidermal wound repair but is essential to form the epidermal barrier with TGM3 as critical direct target gene among others. Despite being dispensable during normal epidermal homeostasis in the adulthood, is again required for barrier repair after immune-mediated epidermal damage, regulates distinct gene batteries in embryonic epidermal differentiation and adult epidermal barrier reformation after injury. Plays unique and cooperative roles with GRHL2 in establishing distinct zones of primary neurulation. Essential for spinal closure, functions cooperatively with GRHL2 in closure 2 (forebrain/midbrain boundary) and posterior neuropore closure. Also required for proper development of the oral periderm. No genetic interaction with GRHL3, no functional cooperativity due to diverse target gene selectivity. This is Grainyhead-like protein 3 homolog from Homo sapiens (Human).